The sequence spans 49 residues: Venom peptide 3 (49 aa).

The N-terminal stretch at 1-23 (MRFTFVLVIAATVAVLGFFGINA) is a signal peptide. AXPX repeat units lie at residues 23–26 (AEPM) and 31–34 (AEPY). The propeptide occupies 24–37 (EPMPDPHAEPYPDA). A Leucine amide modification is found at Leu-48.

As to expression, expressed by the venom gland.

The protein localises to the secreted. This chain is Venom peptide 3, found in Eumenes pomiformis (Potter wasp).